The chain runs to 128 residues: Large ribosomal subunit protein bL17 (128 aa).

It belongs to the bacterial ribosomal protein bL17 family. As to quaternary structure, part of the 50S ribosomal subunit. Contacts protein L32.

This Tolumonas auensis (strain DSM 9187 / NBRC 110442 / TA 4) protein is Large ribosomal subunit protein bL17.